The primary structure comprises 648 residues: Indolepyruvate oxidoreductase subunit IorA (648 aa).

4Fe-4S ferredoxin-type domains are found at residues 585–614 and 616–645; these read PIYQ…WDPE and KKAK…KVRE. [4Fe-4S] cluster is bound by residues Cys594, Cys597, Cys600, Cys606, Cys625, Cys628, Cys631, and Cys635.

In terms of assembly, heterodimer of the IorA and IorB subunits. [4Fe-4S] cluster is required as a cofactor.

The catalysed reaction is indole-3-pyruvate + 2 oxidized [2Fe-2S]-[ferredoxin] + CoA = (indol-3-yl)acetyl-CoA + 2 reduced [2Fe-2S]-[ferredoxin] + CO2 + H(+). Functionally, catalyzes the ferredoxin-dependent oxidative decarboxylation of arylpyruvates. The sequence is that of Indolepyruvate oxidoreductase subunit IorA (iorA) from Pyrococcus abyssi (strain GE5 / Orsay).